The sequence spans 175 residues: Sec-independent protein translocase protein TatB (175 aa).

A helical transmembrane segment spans residues 1–21 (MLDLGLTKMALIGVVALVVLG). 2 disordered regions span residues 104–132 (GGALEDVGNAGNTSWPGSTPAAGAKRKNW) and 155–175 (SGAARVARHTPATMRRPTRFF).

Belongs to the TatB family. In terms of assembly, the Tat system comprises two distinct complexes: a TatABC complex, containing multiple copies of TatA, TatB and TatC subunits, and a separate TatA complex, containing only TatA subunits. Substrates initially bind to the TatABC complex, which probably triggers association of the separate TatA complex to form the active translocon.

The protein resides in the cell inner membrane. Part of the twin-arginine translocation (Tat) system that transports large folded proteins containing a characteristic twin-arginine motif in their signal peptide across membranes. Together with TatC, TatB is part of a receptor directly interacting with Tat signal peptides. TatB may form an oligomeric binding site that transiently accommodates folded Tat precursor proteins before their translocation. This chain is Sec-independent protein translocase protein TatB, found in Paraburkholderia xenovorans (strain LB400).